The primary structure comprises 454 residues: Allantoinase (454 aa).

Zn(2+)-binding residues include His-58, His-60, Lys-149, His-189, His-245, and Asp-318. Lys-149 carries the post-translational modification N6-carboxylysine.

Belongs to the metallo-dependent hydrolases superfamily. Allantoinase family. In terms of assembly, homotetramer. The cofactor is Zn(2+). In terms of processing, carboxylation allows a single lysine to coordinate two zinc ions.

The enzyme catalyses (S)-allantoin + H2O = allantoate + H(+). The protein operates within nitrogen metabolism; (S)-allantoin degradation; allantoate from (S)-allantoin: step 1/1. Functionally, catalyzes the conversion of allantoin (5-ureidohydantoin) to allantoic acid by hydrolytic cleavage of the five-member hydantoin ring. This is Allantoinase from Enterococcus faecalis (strain ATCC 700802 / V583).